A 274-amino-acid chain; its full sequence is Malonyl-[acyl-carrier protein] O-methyltransferase (274 aa).

It belongs to the methyltransferase superfamily.

It catalyses the reaction malonyl-[ACP] + S-adenosyl-L-methionine = malonyl-[ACP] methyl ester + S-adenosyl-L-homocysteine. It participates in cofactor biosynthesis; biotin biosynthesis. Converts the free carboxyl group of a malonyl-thioester to its methyl ester by transfer of a methyl group from S-adenosyl-L-methionine (SAM). It allows to synthesize pimeloyl-ACP via the fatty acid synthetic pathway. The protein is Malonyl-[acyl-carrier protein] O-methyltransferase of Priestia megaterium (strain DSM 319 / IMG 1521) (Bacillus megaterium).